We begin with the raw amino-acid sequence, 110 residues long: V-type proton ATPase subunit G 1 (110 aa).

This sequence belongs to the V-ATPase G subunit family. V-ATPase is a heteromultimeric enzyme composed of a peripheral catalytic V1 complex (components A to H) attached to an integral membrane V0 proton pore complex (components: a, c, c', c'' and d).

In terms of biological role, catalytic subunit of the peripheral V1 complex of vacuolar ATPase (V-ATPase). V-ATPase is responsible for acidifying a variety of intracellular compartments in eukaryotic cells. The protein is V-type proton ATPase subunit G 1 (VATG1) of Nicotiana tabacum (Common tobacco).